The chain runs to 361 residues: Protein-L-isoaspartate O-methyltransferase domain-containing protein 2 (361 aa).

Residue glycine 2 is the site of N-myristoyl glycine attachment. Residue serine 64 is part of the active site. AdoMet binding motif regions lie at residues 85–94 (LNLGSGTGYL), 160–164 (YDRVY), and 181–191 (LKVGGILVMPL). The segment at 240 to 250 (VRSLQDLARIA) is BC-box. The tract at residues 303 to 336 (SNPSDDNSCEDLEEERREEEEKTPPETKPDPPVN) is disordered. Positions 309 to 320 (NSCEDLEEERRE) are enriched in acidic residues. Residues 321–331 (EEEKTPPETKP) show a composition bias toward basic and acidic residues. A CUL-box region spans residues 345–348 (LPLP).

The protein belongs to the methyltransferase superfamily. L-isoaspartyl/D-aspartyl protein methyltransferase family.

The protein resides in the cytoplasm. In terms of biological role, may act as a substrate recognition component of an ECS (Elongin BC-CUL5-SOCS-box protein) E3 ubiquitin ligase complex which mediates the ubiquitination and subsequent proteasomal degradation of target proteins. May bind to the methyltransferase cofactor S-adenosylmethionine (AdoMet) via the N-terminal AdoMet binding motif, but probably does not display methyltransferase activity. The protein is Protein-L-isoaspartate O-methyltransferase domain-containing protein 2 (PCMTD2) of Homo sapiens (Human).